The sequence spans 266 residues: Putative carbamate hydrolase RutD (266 aa).

This sequence belongs to the AB hydrolase superfamily. Hydrolase RutD family.

The catalysed reaction is carbamate + 2 H(+) = NH4(+) + CO2. Functionally, involved in pyrimidine catabolism. May facilitate the hydrolysis of carbamate, a reaction that can also occur spontaneously. The chain is Putative carbamate hydrolase RutD from Escherichia coli O157:H7.